Reading from the N-terminus, the 83-residue chain is Small ribosomal subunit protein bS16 (83 aa).

It belongs to the bacterial ribosomal protein bS16 family.

In Shewanella halifaxensis (strain HAW-EB4), this protein is Small ribosomal subunit protein bS16.